Reading from the N-terminus, the 502-residue chain is Potassium channel KAT3 (502 aa).

At 1–67 (MPRSSRMNLW…PYDPRYKVWE (67 aa)) the chain is on the cytoplasmic side. The helical transmembrane segment at 68–88 (TFLIILVVYSAWICPLEFAFL) threads the bilayer. The Extracellular portion of the chain corresponds to 89-95 (RYLPSAP). Residues 96–116 (FVVDDVVNGFFAVDIMLTFFV) form a helical membrane-spanning segment. Residues 117–138 (PFVDKKSYLLVNDPKKIAVRYL) are Cytoplasmic-facing. Residues 139 to 159 (SSWFVFDVCSTVPFHSISLLF) form a helical membrane-spanning segment. Residues 160–169 (NEHGHDLGFK) lie on the Extracellular side of the membrane. A helical; Voltage-sensor membrane pass occupies residues 170-190 (FLNVLRLWRLRRVSSMFARLE). The Cytoplasmic portion of the chain corresponds to 191–204 (KDIRFNYAVIRCTK). The chain crosses the membrane as a helical span at residues 205–225 (LISVTLFAIHCAGCINYLIAD). Residues 226-252 (RYPDPRRTWIGAVMPNFREDGLWIRYV) lie on the Extracellular side of the membrane. An intramembrane region (pore-forming) is located at residues 253–272 (TAMYWSITTLTTTGYGDLHA). Residues 273–276 (ENAR) are Extracellular-facing. The chain crosses the membrane as a helical span at residues 277–297 (EMLFGICYMLFNLWLTAYLIG). At 298-502 (NMTNLVVHST…IRSNLQQVNV (205 aa)) the chain is on the cytoplasmic side. 381–500 (LFKGVSSRFI…DIIRSNLQQV (120 aa)) contributes to the a nucleoside 3',5'-cyclic phosphate binding site.

The protein belongs to the potassium channel family. Plant (TC 1.A.1.4) subfamily.

Its subcellular location is the membrane. In terms of biological role, probable inward-rectifying potassium channel. Assuming opened or closed conformations in response to the voltage difference across the membrane, the channel is activated by hyperpolarization. The sequence is that of Potassium channel KAT3 from Oryza sativa subsp. japonica (Rice).